The following is a 245-amino-acid chain: Probable transcriptional regulatory protein Ddes_0536 (245 aa).

The segment at 1-21 is disordered; that stretch reads MAGHSKWANIQHRKGRQDAKR.

It belongs to the TACO1 family.

The protein localises to the cytoplasm. The sequence is that of Probable transcriptional regulatory protein Ddes_0536 from Desulfovibrio desulfuricans (strain ATCC 27774 / DSM 6949 / MB).